The following is a 311-amino-acid chain: Immune-associated nucleotide-binding protein 7 (311 aa).

The 209-residue stretch at 14–222 folds into the AIG1-type G domain; that stretch reads KQAENIVLVG…YTDDTYHMIK (209 aa). Residues 23 to 30 are G1; sequence GRTGNGKS. Residues 23 to 31 and Ser44 each bind GTP; that span reads GRTGNGKSA. The G2 stretch occupies residues 50–54; that stretch reads GVTMK. The segment at 72–75 is G3; it reads DTPG. Residues 142-145 form a G4 region; that stretch reads TGGD. Residues 181–183 form a G5 region; it reads DNK. Asn182 serves as a coordination point for GTP. A coiled-coil region spans residues 218 to 295; the sequence is YHMIKEESEK…TQENNELNLA (78 aa).

This sequence belongs to the TRAFAC class TrmE-Era-EngA-EngB-Septin-like GTPase superfamily. AIG1/Toc34/Toc159-like paraseptin GTPase family. IAN subfamily. As to expression, ubiquitous.

This is Immune-associated nucleotide-binding protein 7 from Arabidopsis thaliana (Mouse-ear cress).